An 81-amino-acid polypeptide reads, in one-letter code: Cytotoxin I-like T-15 (81 aa).

Positions 1 to 21 (MKTLLLTLVVVTIVCLDLGYT) are cleaved as a signal peptide. Cystine bridges form between cysteine 24-cysteine 42, cysteine 35-cysteine 59, cysteine 63-cysteine 74, and cysteine 75-cysteine 80.

Belongs to the three-finger toxin family. Short-chain subfamily. Type IA cytotoxin sub-subfamily. In terms of assembly, monomer in solution; Homodimer and oligomer in the presence of negatively charged lipids forming a pore with a size ranging between 20 and 30 Angstroms. In terms of tissue distribution, expressed by the venom gland.

It is found in the secreted. It localises to the target cell membrane. Its function is as follows. Shows cytolytic activity on many different cells by forming pore in lipid membranes. In vivo, increases heart rate or kills the animal by cardiac arrest. In addition, it binds to heparin with high affinity, interacts with Kv channel-interacting protein 1 (KCNIP1) in a calcium-independent manner, and binds to integrin alpha-V/beta-3 (ITGAV/ITGB3) with moderate affinity. The protein is Cytotoxin I-like T-15 of Naja atra (Chinese cobra).